The sequence spans 253 residues: Pre-mRNA-splicing factor SPF27 homolog (253 aa).

A coiled-coil region spans residues 124-235 (KQYLQKNQRS…IDSFKKEAAE (112 aa)).

Belongs to the SPF27 family. Component of the multiprotein assembly MOS4-associated complex (MAC) at least composed of MOS4, CDC5 and PRL1. Interacts with CYCL1-1 and CDC5. Associated with the spliceosome. Interacts with ENY2.

The protein resides in the nucleus. In terms of biological role, component of the MAC complex that probably regulates defense responses through transcriptional control and thereby is essential for plant innate immunity. Involved in mRNA splicing. The sequence is that of Pre-mRNA-splicing factor SPF27 homolog (MOS4) from Arabidopsis thaliana (Mouse-ear cress).